The primary structure comprises 254 residues: Ribonuclease HII (254 aa).

An RNase H type-2 domain is found at 70-254 (QAIAGIDEVG…TFEPIKSMYE (185 aa)). A divalent metal cation-binding residues include D76, E77, and D168.

Belongs to the RNase HII family. Mn(2+) is required as a cofactor. Requires Mg(2+) as cofactor.

It localises to the cytoplasm. It carries out the reaction Endonucleolytic cleavage to 5'-phosphomonoester.. Endonuclease that specifically degrades the RNA of RNA-DNA hybrids. This chain is Ribonuclease HII, found in Streptococcus sanguinis (strain SK36).